Here is a 363-residue protein sequence, read N- to C-terminus: Carbamoyl phosphate synthase small chain (363 aa).

Residues 1 to 172 form a CPSase region; sequence MTKRILMLED…AFASPGDGKR (172 aa). S46, G220, and G222 together coordinate L-glutamine. Residues 172–359 form the Glutamine amidotransferase type-1 domain; that stretch reads RVVLVDYGVK…MEMMNGKEEG (188 aa). C247 functions as the Nucleophile in the catalytic mechanism. L-glutamine is bound by residues L248, Q251, N289, G291, and Y292. Residues H332 and E334 contribute to the active site.

The protein belongs to the CarA family. Composed of two chains; the small (or glutamine) chain promotes the hydrolysis of glutamine to ammonia, which is used by the large (or ammonia) chain to synthesize carbamoyl phosphate. Tetramer of heterodimers (alpha,beta)4.

It carries out the reaction hydrogencarbonate + L-glutamine + 2 ATP + H2O = carbamoyl phosphate + L-glutamate + 2 ADP + phosphate + 2 H(+). It catalyses the reaction L-glutamine + H2O = L-glutamate + NH4(+). It participates in amino-acid biosynthesis; L-arginine biosynthesis; carbamoyl phosphate from bicarbonate: step 1/1. The protein operates within pyrimidine metabolism; UMP biosynthesis via de novo pathway; (S)-dihydroorotate from bicarbonate: step 1/3. Small subunit of the glutamine-dependent carbamoyl phosphate synthetase (CPSase). CPSase catalyzes the formation of carbamoyl phosphate from the ammonia moiety of glutamine, carbonate, and phosphate donated by ATP, constituting the first step of 2 biosynthetic pathways, one leading to arginine and/or urea and the other to pyrimidine nucleotides. The small subunit (glutamine amidotransferase) binds and cleaves glutamine to supply the large subunit with the substrate ammonia. This is Carbamoyl phosphate synthase small chain from Listeria monocytogenes serovar 1/2a (strain ATCC BAA-679 / EGD-e).